The primary structure comprises 181 residues: Photosystem I assembly protein Ycf4 (181 aa).

2 helical membrane-spanning segments follow: residues 19 to 41 (YFWA…SSYF) and 61 to 83 (LVMS…TLFW).

This sequence belongs to the Ycf4 family.

The protein localises to the plastid. It is found in the chloroplast thylakoid membrane. Its function is as follows. Seems to be required for the assembly of the photosystem I complex. The protein is Photosystem I assembly protein Ycf4 of Trieres chinensis (Marine centric diatom).